The following is a 62-amino-acid chain: DNA gyrase inhibitor YacG (62 aa).

The Zn(2+) site is built by Cys8, Cys11, Cys27, and Cys31.

This sequence belongs to the DNA gyrase inhibitor YacG family. As to quaternary structure, interacts with GyrB. Requires Zn(2+) as cofactor.

Its function is as follows. Inhibits all the catalytic activities of DNA gyrase by preventing its interaction with DNA. Acts by binding directly to the C-terminal domain of GyrB, which probably disrupts DNA binding by the gyrase. The chain is DNA gyrase inhibitor YacG from Actinobacillus pleuropneumoniae serotype 5b (strain L20).